Reading from the N-terminus, the 161-residue chain is tRNA-specific adenosine deaminase (161 aa).

In terms of domain architecture, CMP/dCMP-type deaminase spans 2–120 (TQDELYMKEA…GTLMNLLQEE (119 aa)). His-53 contributes to the Zn(2+) binding site. Residue Glu-55 is the Proton donor of the active site. Residues Cys-83 and Cys-86 each coordinate Zn(2+).

Belongs to the cytidine and deoxycytidylate deaminase family. Homodimer. Zn(2+) serves as cofactor.

The enzyme catalyses adenosine(34) in tRNA + H2O + H(+) = inosine(34) in tRNA + NH4(+). Functionally, catalyzes the deamination of adenosine to inosine at the wobble position 34 of tRNA(Arg2). This is tRNA-specific adenosine deaminase from Bacillus subtilis (strain 168).